The following is a 474-amino-acid chain: PTS system N-acetylmuramic acid-specific EIIBC component (474 aa).

A PTS EIIB type-1 domain is found at 1 to 89 (MAKEISSELL…SELLGEAPVQ (89 aa)). Residues 1–123 (MAKEISSELL…LAKFATIFTP (123 aa)) are Cytoplasmic-facing. Catalysis depends on cysteine 29, which acts as the Phosphocysteine intermediate; for EIIB activity. Residues 115–474 (AKFATIFTPL…LFGCRNVNLD (360 aa)) form the PTS EIIC type-1 domain. The chain crosses the membrane as a helical span at residues 124–144 (LIPGFIAAGLLLGIATLIATV). Over 145–157 (MHVPADAQGTLPD) the chain is Periplasmic. Residues 158-178 (ALNFMKVFSKGLFTFLVILVG) form a helical membrane-spanning segment. Residues 179–180 (YN) lie on the Cytoplasmic side of the membrane. Residues 181-201 (AAQAFGGTGVNGAIIAALFLL) form a helical membrane-spanning segment. Residues 202–217 (GYNPAATTGYYAGFHD) are Periplasmic-facing. The chain crosses the membrane as a helical span at residues 218-238 (FFGLPIDPRGNIIGVLIAAWA). Topologically, residues 239–260 (CARIEGMVRRFMPDDLDMLLTS) are cytoplasmic. Residues 261–281 (LITLLITATLAYLIIMPLGGW) traverse the membrane as a helical segment. Residues 282 to 301 (LFEGMSWLFMHLNSNPFGCA) are Periplasmic-facing. A helical transmembrane segment spans residues 302 to 322 (VLAGLFLIAVVFGVHQGFIPV). At 323–334 (YLALMDSQGFNS) the chain is on the cytoplasmic side. A helical membrane pass occupies residues 335 to 355 (LFPILSMAGAGQVGAALALYW). The Periplasmic segment spans residues 356–368 (RAQPHSALRSQVR). A helical transmembrane segment spans residues 369–389 (GAIIPGLLGVGEPLIYGVTLP). Topologically, residues 390–393 (RMKP) are cytoplasmic. A helical transmembrane segment spans residues 394-414 (FVTACLGGAAGGLFIGLIAWW). The Periplasmic portion of the chain corresponds to 415 to 440 (GLPMGLNSAFGPSGLVALPLMTSAQG). The chain crosses the membrane as a helical span at residues 441–461 (ILPAMAVYAGGILVAWVCGFI). Topologically, residues 462 to 474 (FTTLFGCRNVNLD) are cytoplasmic.

The protein resides in the cell inner membrane. The catalysed reaction is N-acetyl-beta-D-muramate(out) + N(pros)-phospho-L-histidyl-[protein] = N-acetyl-beta-D-muramate 6-phosphate(in) + L-histidyl-[protein]. In terms of biological role, the phosphoenolpyruvate-dependent sugar phosphotransferase system (sugar PTS), a major carbohydrate active transport system, catalyzes the phosphorylation of incoming sugar substrates concomitantly with their translocation across the cell membrane. This system is involved in N-acetylmuramic acid (MurNAc) transport, yielding cytoplasmic MurNAc-6-P. Is responsible for growth on MurNAc as the sole source of carbon and energy. Is also able to take up anhydro-N-acetylmuramic acid (anhMurNAc), but cannot phosphorylate the carbon 6, probably because of the 1,6-anhydro ring. The chain is PTS system N-acetylmuramic acid-specific EIIBC component (murP) from Escherichia coli (strain K12).